The primary structure comprises 436 residues: 3-ketoacyl-CoA thiolase (436 aa).

C99 functions as the Acyl-thioester intermediate in the catalytic mechanism. Residues H392 and C422 each act as proton acceptor in the active site.

It belongs to the thiolase-like superfamily. Thiolase family. Heterotetramer of two alpha chains (FadJ) and two beta chains (FadI).

It localises to the cytoplasm. The enzyme catalyses an acyl-CoA + acetyl-CoA = a 3-oxoacyl-CoA + CoA. It participates in lipid metabolism; fatty acid beta-oxidation. Catalyzes the final step of fatty acid oxidation in which acetyl-CoA is released and the CoA ester of a fatty acid two carbons shorter is formed. The sequence is that of 3-ketoacyl-CoA thiolase from Serratia proteamaculans (strain 568).